We begin with the raw amino-acid sequence, 187 residues long: ECF RNA polymerase sigma factor SigK (187 aa).

The sigma-70 factor domain-2 stretch occupies residues 30-96 (YDHTKSRVYG…RAVDRVRCEQ (67 aa)). Positions 53 to 56 (ETTQ) match the Interaction with polymerase core subunit RpoC motif. The tract at residues 133–182 (CLKALTDTQRQCIELAYYGGLTYVEVSRRLAANLSTIKSRMRDALRSLRN) is sigma-70 factor domain-4. A DNA-binding region (H-T-H motif) is located at residues 155–174 (YVEVSRRLAANLSTIKSRMR).

This sequence belongs to the sigma-70 factor family. ECF subfamily. In terms of assembly, interacts transiently with the RNA polymerase catalytic core formed by RpoA, RpoB, RpoC and RpoZ (2 alpha, 1 beta, 1 beta' and 1 omega subunit) to form the RNA polymerase holoenzyme that can initiate transcription. Interacts (via sigma-70 factor domain 4) with anti-sigma-K factor RskA.

In terms of biological role, sigma factors are initiation factors that promote the attachment of RNA polymerase to specific initiation sites and are then released. Extracytoplasmic function (ECF) sigma factors are held in an inactive form by an anti-sigma factor until released by regulated intramembrane proteolysis. The protein is ECF RNA polymerase sigma factor SigK (sigK) of Mycobacterium tuberculosis (strain ATCC 25177 / H37Ra).